The primary structure comprises 623 residues: tRNA uridine 5-carboxymethylaminomethyl modification enzyme MnmG (623 aa).

Residue G12–G17 coordinates FAD. NAD(+) is bound at residue G272–F286.

The protein belongs to the MnmG family. In terms of assembly, homodimer. Heterotetramer of two MnmE and two MnmG subunits. The cofactor is FAD.

The protein localises to the cytoplasm. NAD-binding protein involved in the addition of a carboxymethylaminomethyl (cmnm) group at the wobble position (U34) of certain tRNAs, forming tRNA-cmnm(5)s(2)U34. This is tRNA uridine 5-carboxymethylaminomethyl modification enzyme MnmG from Christiangramia forsetii (strain DSM 17595 / CGMCC 1.15422 / KT0803) (Gramella forsetii).